The sequence spans 318 residues: Cytochrome f (318 aa).

Positions 1–33 (MKNTFSWIKKEITRSISLSLMIYIITRTSISNA) are cleaved as a signal peptide. Y34, C54, C57, and H58 together coordinate heme. The helical transmembrane segment at 284–304 (VQGLLFFLASVILAQIFLVLK) threads the bilayer.

It belongs to the cytochrome f family. In terms of assembly, the 4 large subunits of the cytochrome b6-f complex are cytochrome b6, subunit IV (17 kDa polypeptide, petD), cytochrome f and the Rieske protein, while the 4 small subunits are PetG, PetL, PetM and PetN. The complex functions as a dimer. The cofactor is heme.

The protein resides in the plastid. Its subcellular location is the chloroplast thylakoid membrane. Functionally, component of the cytochrome b6-f complex, which mediates electron transfer between photosystem II (PSII) and photosystem I (PSI), cyclic electron flow around PSI, and state transitions. The polypeptide is Cytochrome f (Oenothera biennis (German evening primrose)).